Reading from the N-terminus, the 209-residue chain is Putative 3-methyladenine DNA glycosylase (209 aa).

Belongs to the DNA glycosylase MPG family.

This Lactiplantibacillus plantarum (strain ATCC BAA-793 / NCIMB 8826 / WCFS1) (Lactobacillus plantarum) protein is Putative 3-methyladenine DNA glycosylase.